The primary structure comprises 195 residues: Transcriptional regulator GfcR (195 aa).

It belongs to the purine/pyrimidine phosphoribosyltransferase family. GfcR subfamily.

This chain is Transcriptional regulator GfcR, found in Picrophilus torridus (strain ATCC 700027 / DSM 9790 / JCM 10055 / NBRC 100828 / KAW 2/3).